Consider the following 28-residue polypeptide: M-poneritoxin-Da4b (28 aa).

Residue Ala28 is modified to Alanine amide.

As to expression, expressed by the venom gland.

Its subcellular location is the secreted. In terms of biological role, the synthetic peptide has antimicrobial activity against the Gram-positive bacteria B.amyloliquefacies S499 (MIC=0.05 mM), L.monocytogenes 2231 and S.aureus ATCC 29213, against the Gram-negative bacteria P.putida BTP1, P.aeruginosa PaO1 and E.coli ATCC 10536, and against the fungi S.cerevisiae, R.mucilaginosa and C.cucumerinum. It is not active against the fungi F.oxysporum and B.cinerea. The chain is M-poneritoxin-Da4b from Dinoponera australis (Giant neotropical hunting ant).